The chain runs to 197 residues: 3-isopropylmalate dehydratase small subunit (197 aa).

This sequence belongs to the LeuD family. LeuD type 1 subfamily. Heterodimer of LeuC and LeuD.

The enzyme catalyses (2R,3S)-3-isopropylmalate = (2S)-2-isopropylmalate. The protein operates within amino-acid biosynthesis; L-leucine biosynthesis; L-leucine from 3-methyl-2-oxobutanoate: step 2/4. Functionally, catalyzes the isomerization between 2-isopropylmalate and 3-isopropylmalate, via the formation of 2-isopropylmaleate. The chain is 3-isopropylmalate dehydratase small subunit from Streptococcus suis (strain 98HAH33).